We begin with the raw amino-acid sequence, 345 residues long: DNA N(6)-methyladenine demethylase ALKBH1A (345 aa).

Substrate contacts are provided by residues tryptophan 179 and 186–188 (FDW). In terms of domain architecture, Fe2OG dioxygenase spans 225-345 (RPEGAIVNYF…RININIRQVF (121 aa)). 2-oxoglutarate is bound at residue 232 to 234 (NYF). Fe cation contacts are provided by histidine 243, aspartate 245, and histidine 299. Residue 336-342 (RININIR) participates in 2-oxoglutarate binding.

The protein belongs to the alkB family. The cofactor is Fe(2+). Mostly expressed in siliques, to a lower extent in roots, seedlings and rosette leaves, but barely in cauline leaves, stems and flowers.

It is found in the nucleus. The protein localises to the cytoplasm. The catalysed reaction is an N(6)-methyl-2'-deoxyadenosine in DNA + 2-oxoglutarate + O2 = a 2'-deoxyadenosine in DNA + formaldehyde + succinate + CO2. Its function is as follows. Dioxygenase that catalyzes DNA N(6)-methyladenine (6 mA) demethylation to modulate gene expression and regulate seed germination. The polypeptide is DNA N(6)-methyladenine demethylase ALKBH1A (Arabidopsis thaliana (Mouse-ear cress)).